An 824-amino-acid polypeptide reads, in one-letter code: Vesicle-fusing ATPase (824 aa).

ATP is bound by residues 582 to 587 (RGMIVW) and 622 to 629 (AKTGKTSL). Thr-627 lines the Mg(2+) pocket.

This sequence belongs to the AAA ATPase family. In terms of assembly, homohexamer. It depends on Mg(2+) as a cofactor.

It localises to the cytoplasm. The catalysed reaction is ATP + H2O = ADP + phosphate + H(+). Its function is as follows. Required for vesicle-mediated transport. Catalyzes the fusion of transport vesicles within the Golgi cisternae. Is also required for transport from the endoplasmic reticulum to the Golgi stack. Seems to function as a fusion protein required for the delivery of cargo proteins to all compartments of the Golgi stack independent of vesicle origin. The polypeptide is Vesicle-fusing ATPase (nsf-1) (Caenorhabditis elegans).